Consider the following 590-residue polypeptide: L-fucose isomerase (590 aa).

Active-site proton acceptor residues include Glu-337 and Asp-361. The Mn(2+) site is built by Glu-337, Asp-361, and His-528.

Belongs to the L-fucose isomerase family. The cofactor is Mn(2+).

It localises to the cytoplasm. It catalyses the reaction L-fucose = L-fuculose. It functions in the pathway carbohydrate degradation; L-fucose degradation; L-lactaldehyde and glycerone phosphate from L-fucose: step 1/3. Its function is as follows. Converts the aldose L-fucose into the corresponding ketose L-fuculose. The protein is L-fucose isomerase of Bacteroides fragilis (strain YCH46).